The primary structure comprises 379 residues: MGCLGNSKTEDQRNEEKVQRETNKKIEKQLQKDKQVYRATHRLLLLGAGESGKSSIVKQMRILHVNGFNAEEKKTKVQDIKNNIKEAIETIVTAMGNLSPPVELVNPENQFRIDYILNLPNYKDFEFSPEFYEHTKTLWQDEGVRACYERSNEYQLIDCAQYFLDKIDIVKQNDYTPSDQDLLRCRVLTSGIFETKFQVDKVNFHMFDVGGQRDERRKWIQCFNDVTAIIFVVASSSYNMVIREDNHTNRLQEALNLFKSIWNNRWLRTISVILFLNKQDLLAEKVNAGKSKIEDYFPEFARYTTPDDATPEVGEDPRVTRAKYFIRDEFLRISTASGDGRHYCYPHFTCAVDTENIRRVFNDCRDIIQRMHLRQYELL.

The interval M1–K25 is disordered. A lipid anchor (N-palmitoyl glycine) is attached at G2. A lipid anchor (S-palmitoyl cysteine) is attached at C3. Over residues K8–K25 the composition is skewed to basic and acidic residues. Residues A39–L379 enclose the G-alpha domain. The G1 motif stretch occupies residues R42–S55. GTP is bound by residues G47–S55, L182–T189, D208–Q212, N277–D280, and A351. Residues S54 and T189 each contribute to the Mg(2+) site. The G2 motif stretch occupies residues D181–T189. Positions F204–R213 are G3 motif. The segment at I273–D280 is G4 motif. The segment at T349–T354 is G5 motif.

This sequence belongs to the G-alpha family. G(s) subfamily. As to quaternary structure, heterotrimeric G proteins are composed of 3 units; alpha, beta and gamma. The alpha chain contains the guanine nucleotide binding site.

The protein resides in the cell membrane. Guanine nucleotide-binding proteins (G proteins) function as transducers in numerous signaling pathways controlled by G protein-coupled receptors (GPCRs). Signaling involves the activation of adenylyl cyclases, resulting in increased levels of the signaling molecule cAMP. GNAS functions downstream of several GPCRs, including beta-adrenergic receptors. Stimulates the Ras signaling pathway. In Xenopus laevis (African clawed frog), this protein is Guanine nucleotide-binding protein G(s) subunit alpha (gnas).